Here is a 326-residue protein sequence, read N- to C-terminus: Ficolin-1 (326 aa).

The signal sequence occupies residues 1–29; it reads MELSRVAVALGPTGQLLLFLSFQTLAAQA. Residues 55–93 enclose the Collagen-like domain; that stretch reads GLPGAAGPKGEAGANGPKGERGSPGVVGKAGPAGPKGDR. 2 stretches are compositionally biased toward low complexity: residues 61-71 and 78-89; these read GPKGEAGANGP and PGVVGKAGPAGP. Residues 61–110 form a disordered region; the sequence is GPKGEAGANGPKGERGSPGVVGKAGPAGPKGDRGEKGARGEKGEPGQLQS. Residues 90 to 104 are compositionally biased toward basic and acidic residues; sequence KGDRGEKGARGEKGE. Residues 109–326 form the Fibrinogen C-terminal domain; sequence QSCATGPRTC…QVSEMKVRLT (218 aa). Disulfide bonds link cysteine 111-cysteine 139 and cysteine 118-cysteine 146. An a domain; contributes to trimerization region spans residues 115-154; it reads PRTCKELLTRGHFLSGWHTIYLPDCQPLTVLCDMDTDGGG. The b domain; contributes to trimerization stretch occupies residues 155–243; it reads WTVFQRRSDG…LVLGGFLEGN (89 aa). Ca(2+)-binding residues include aspartate 262 and aspartate 264. Asparagine 265 is a glycosylation site (N-linked (GlcNAc...) asparagine). Cysteine 270 and cysteine 283 are disulfide-bonded. 282–284 serves as a coordination point for a carbohydrate; it reads ACH. The N-linked (GlcNAc...) asparagine glycan is linked to asparagine 313. The segment at 317–326 is p domain; the sequence is QVSEMKVRLT.

Belongs to the ficolin lectin family. As to quaternary structure, homotrimer. Interacts with elastin/ELN. Interacts (via Fibrinogen C-terminal domain) with FFAR2. Interacts with CRP; may regulate monocyte activation by FCN1. Most abundantly expressed in placenta and lung.

The protein resides in the secreted. It is found in the cell membrane. Extracellular lectin functioning as a pattern-recognition receptor in innate immunity. Binds the sugar moieties of pathogen-associated molecular patterns (PAMPs) displayed on microbes and activates the lectin pathway of the complement system. May also activate monocytes through a G protein-coupled receptor, FFAR2, inducing the secretion of interleukin-8/IL-8. Binds preferentially to 9-O-acetylated 2-6-linked sialic acid derivatives and to various glycans containing sialic acid engaged in a 2-3 linkage. This Sus scrofa (Pig) protein is Ficolin-1 (FCN1).